The following is a 518-amino-acid chain: Protein translocase subunit SecD (518 aa).

A run of 6 helical transmembrane segments spans residues 9-29 (IVLS…NFIQ), 356-376 (GKKA…LSYG), 377-397 (VIGL…LALL), 406-426 (LPGI…NVLI), 451-473 (AFAT…YIFG), and 486-506 (IGII…IDIW).

It belongs to the SecD/SecF family. SecD subfamily. In terms of assembly, forms a complex with SecF. Part of the essential Sec protein translocation apparatus which comprises SecA, SecYEG and auxiliary proteins SecDF-YajC and YidC.

The protein localises to the cell inner membrane. Its function is as follows. Part of the Sec protein translocase complex. Interacts with the SecYEG preprotein conducting channel. SecDF uses the proton motive force (PMF) to complete protein translocation after the ATP-dependent function of SecA. The protein is Protein translocase subunit SecD of Rickettsia typhi (strain ATCC VR-144 / Wilmington).